We begin with the raw amino-acid sequence, 85 residues long: U1-theraphotoxin-Hs1a (85 aa).

Positions methionine 1–alanine 22 are cleaved as a signal peptide. The propeptide occupies glutamate 23 to arginine 48. Cystine bridges form between cysteine 52-cysteine 66, cysteine 56-cysteine 77, and cysteine 71-cysteine 82.

In terms of assembly, heterodimer composed of the two variants Ile-58 and Gln-58. In terms of tissue distribution, expressed by the venom gland.

The protein localises to the secreted. Functionally, lethal neurotoxin that blocks neuromuscular transmission. Acts cooperatively to potentiate the activity of huwentoxin-I. This toxin is active against insects. The protein is U1-theraphotoxin-Hs1a of Cyriopagopus schmidti (Chinese bird spider).